The chain runs to 576 residues: MKWDTGRMARIIEAAQGKRVVDLCIRRCRLVNVLSGSIDTVDLAIHEGFVAGWGSYRAAREIDADGMYVCPGFIDGHIHIESTLLAPAQFCAAAVPQGTAAVVADPHEIANVLGLSGIRYFLEASEGLPLDFFFNLPSCVPATPLETSGAALRAPDLDALLPHERLIGLAEMMNFPGVLSGFPDVIDKLLLFQARRIDGHAPQLGDLGLNAYVAAGITSDHECTTLEEAREKLAKGMTVMIREGGQSRDLAALLPAVDEHTWPRCCFVSDDVHPDGLLREGHMNVIVNRAMSLGMAPVRALSLAALTPARHFRLDRRGALAPGYHADFSMSPTLNPWQPERVFKAGVEVARDGRLLLDLGNGNGVAAPPSPMHITRLLAEDLVVPAQPGLLRIIGVREGTLLTRKIVLPPKIHEGAAVADLDRDILKLAVYNRYVPDRPPAVAFVQGLGLKEGAIATTVAHDSHNLIVAGASDADILHVVDAVRKSGGGMAAGRTGAEVDVLALPIAGLMSDQPVERVAERLEQLQGRARAAGSGLRNPFMALSFLALPVIPELKLTDLGLIDVSTFSPVSLFETS.

This sequence belongs to the metallo-dependent hydrolases superfamily. Adenine deaminase family. It depends on Mn(2+) as a cofactor.

The catalysed reaction is adenine + H2O + H(+) = hypoxanthine + NH4(+). This chain is Adenine deaminase, found in Syntrophobacter fumaroxidans (strain DSM 10017 / MPOB).